The following is a 509-amino-acid chain: GMP synthase [glutamine-hydrolyzing] (509 aa).

In terms of domain architecture, Glutamine amidotransferase type-1 spans 4-193; the sequence is KILILDFGSQ…VVHICGCSQD (190 aa). The active-site Nucleophile is the Cys-79. Catalysis depends on residues His-167 and Glu-169. Positions 194–384 constitute a GMPS ATP-PPase domain; the sequence is WTPDAFVETT…LGIDDIILKR (191 aa). Residue 221–227 coordinates ATP; the sequence is SGGVDSS.

In terms of assembly, homodimer.

The catalysed reaction is XMP + L-glutamine + ATP + H2O = GMP + L-glutamate + AMP + diphosphate + 2 H(+). Its pathway is purine metabolism; GMP biosynthesis; GMP from XMP (L-Gln route): step 1/1. In terms of biological role, catalyzes the synthesis of GMP from XMP. The chain is GMP synthase [glutamine-hydrolyzing] from Cytophaga hutchinsonii (strain ATCC 33406 / DSM 1761 / CIP 103989 / NBRC 15051 / NCIMB 9469 / D465).